Here is a 173-residue protein sequence, read N- to C-terminus: Translation initiation factor IF-3 (173 aa).

It belongs to the IF-3 family. Monomer.

It is found in the cytoplasm. Functionally, IF-3 binds to the 30S ribosomal subunit and shifts the equilibrium between 70S ribosomes and their 50S and 30S subunits in favor of the free subunits, thus enhancing the availability of 30S subunits on which protein synthesis initiation begins. This Methylorubrum populi (strain ATCC BAA-705 / NCIMB 13946 / BJ001) (Methylobacterium populi) protein is Translation initiation factor IF-3.